A 227-amino-acid polypeptide reads, in one-letter code: NADH-quinone oxidoreductase subunit C (227 aa).

This sequence belongs to the complex I 30 kDa subunit family. As to quaternary structure, NDH-1 is composed of 14 different subunits. Subunits NuoB, C, D, E, F, and G constitute the peripheral sector of the complex.

It localises to the cell inner membrane. The enzyme catalyses a quinone + NADH + 5 H(+)(in) = a quinol + NAD(+) + 4 H(+)(out). Its function is as follows. NDH-1 shuttles electrons from NADH, via FMN and iron-sulfur (Fe-S) centers, to quinones in the respiratory chain. The immediate electron acceptor for the enzyme in this species is believed to be ubiquinone. Couples the redox reaction to proton translocation (for every two electrons transferred, four hydrogen ions are translocated across the cytoplasmic membrane), and thus conserves the redox energy in a proton gradient. The chain is NADH-quinone oxidoreductase subunit C from Legionella pneumophila (strain Paris).